A 105-amino-acid polypeptide reads, in one-letter code: L-rhamnose mutarotase (105 aa).

Tyr19 provides a ligand contact to substrate. His23 serves as the catalytic Proton donor. Residues Tyr42 and 77–78 contribute to the substrate site; that span reads WW.

This sequence belongs to the rhamnose mutarotase family. As to quaternary structure, homodimer.

Its subcellular location is the cytoplasm. It catalyses the reaction alpha-L-rhamnose = beta-L-rhamnose. It functions in the pathway carbohydrate metabolism; L-rhamnose metabolism. Involved in the anomeric conversion of L-rhamnose. The polypeptide is L-rhamnose mutarotase (Mesorhizobium japonicum (strain LMG 29417 / CECT 9101 / MAFF 303099) (Mesorhizobium loti (strain MAFF 303099))).